We begin with the raw amino-acid sequence, 475 residues long: Putative response regulator NtrX-like (475 aa).

The region spanning 5 to 121 (DVLIVDDEES…KLVILLKRAC (117 aa)) is the Response regulatory domain. Asp-54 is modified (4-aspartylphosphate). The 227-residue stretch at 143–369 (LVGGCSVTLK…LRNVVEWTLI (227 aa)) folds into the Sigma-54 factor interaction domain. ATP-binding positions include 171–178 (GKVGSGKE) and 232–241 (ANNGTLYIDE).

Member of the two-component regulatory system RF_0895/RF_0427. This Rickettsia felis (strain ATCC VR-1525 / URRWXCal2) (Rickettsia azadi) protein is Putative response regulator NtrX-like.